Consider the following 940-residue polypeptide: Isoleucine--tRNA ligase (940 aa).

Residues 58 to 68 carry the 'HIGH' region motif; the sequence is PYANGSIHIGH. Position 564 (E564) interacts with L-isoleucyl-5'-AMP. A 'KMSKS' region motif is present at residues 605 to 609; the sequence is KMSKS. K608 is a binding site for ATP. Zn(2+) is bound by residues C903, C906, C923, and C926.

This sequence belongs to the class-I aminoacyl-tRNA synthetase family. IleS type 1 subfamily. In terms of assembly, monomer. Requires Zn(2+) as cofactor.

The protein localises to the cytoplasm. The enzyme catalyses tRNA(Ile) + L-isoleucine + ATP = L-isoleucyl-tRNA(Ile) + AMP + diphosphate. In terms of biological role, catalyzes the attachment of isoleucine to tRNA(Ile). As IleRS can inadvertently accommodate and process structurally similar amino acids such as valine, to avoid such errors it has two additional distinct tRNA(Ile)-dependent editing activities. One activity is designated as 'pretransfer' editing and involves the hydrolysis of activated Val-AMP. The other activity is designated 'posttransfer' editing and involves deacylation of mischarged Val-tRNA(Ile). This is Isoleucine--tRNA ligase from Shewanella baltica (strain OS195).